The following is a 1038-amino-acid chain: MAPYAPTDGISKLAIDQSKHFTEALKEALKSSADQQKVAAEKVSELVAGDANLNLGVVSQELRNALTGNDADAKVVAAHVVDDLMQKHAERVEAYLLPLLSVFLDLLGDKKPTVRPVAQEAALTIISSANKNSTIRILPILFDGLDRSKKWQTKKGALDLIAELSKVAPYQVGRCLPDIIPQVTDCMWDTRKEVKVAARDTMTKVCNVVGNMDIEPFIPALVSCLANPTEVPECTHKLASTTFVKTVEAPALAIMEPLLKRALAEGKTAVKRQAAVIIDNMCKLMDDPAEAQLFIPKLLPGLKKVIETQADPECREVATRAHETLFVAGGSMEVSEDELKVDYANIHKVVVESIAANPTAVKANIDSFVVDYVTGICYFLVVSRNFNKAVFEKEITTYIKAFMKPEEIKPLANEIRDRCFKENKSIFIEDVDCDEGIPDLCNCEFSLAYGGMILLNNARLRLKRGHRYGLCGPNGCGKSTLMRAISNGQLEGFPSRDELKTVFVEHNLQASEAELSVVDFILVDEDLKNTPRKEVEDTLAGVGFTAEMQAQGVGTLSGGWKMKLELARAMLQKADILLLDEPTNHLDVKNVAWLENYLTSLTNVTSIMVSHDSGFLDTVCTNIIHYETRKLKIYKGNLSKFVEQKPEAKAYYELESENVKFIFPEPGFLADIKNKGKPIIRLTNCSYQYPGTPKPSINNISVTCALSSRIAVLGPNGAGKSTLIKMLTGEVEPTSGQVWKHPSMRFAYVAQHAFHHIESHLDETANQYIQWRFQSGEDKELLAKETRKLSKEEKEHYKKPVNWEGEKRVLEEIVSRRKFKKSFEYELKWEKCPVDDNAWVPREKCEKWGWDKLLQIADDREAARANLQARPPTAIAVQKHLDCFGLGAEFGTHSRMRGLSGGQKVKVVLAAAMWLNPHILVLDEPTNYLDRDSLGALASAIKEFNGGVVMITHHNEFSSALTQETWNVEAGFLVIEGQQAEDKTKIEQKNEEEVTDAFGNVTKTKIKRKLTRKEKKAKDKARKEAEARGEYYSDSDEE.

HEAT repeat units lie at residues 93 to 131 (EAYL…SANK), 133 to 170 (STIR…VAPY), 174 to 211 (RCLP…VVGN), 213 to 249 (DIEP…TVEA), 255 to 287 (MEPL…LMDD), and 292 to 331 (QLFI…AGGS). Glu406 contacts ADP. 2 ABC transporter domains span residues 426–654 (IFIE…YYEL) and 680–995 (IRLT…EEVT). Residues Asn716, Glu924, Asn927, and His953 each contribute to the ADP site. The disordered stretch occupies residues 1012–1038 (RKEKKAKDKARKEAEARGEYYSDSDEE). Over residues 1021–1031 (ARKEAEARGEY) the composition is skewed to basic and acidic residues.

It belongs to the ABC transporter superfamily. ABCF family. EF3 subfamily. In terms of assembly, monomer.

The protein resides in the cytoplasm. It catalyses the reaction ATP + H2O = ADP + phosphate + H(+). It functions in the pathway protein biosynthesis; polypeptide chain elongation. In terms of biological role, ribosome-dependent ATPase that functions in cytoplasmic translation elongation. Required for the ATP-dependent release of deacylated tRNA from the ribosomal E-site during protein biosynthesis. Stimulates the eEF1A-dependent binding of aminoacyl-tRNA to the ribosomal A-site, which has reduced affinity for tRNA as long as the E-site is occupied. Assists translation termination by stimulating the release of nascent protein from the ribosome by release factors. The chain is Elongation factor 3 from Phytophthora infestans (strain T30-4) (Potato late blight agent).